The following is a 445-amino-acid chain: Chromosomal replication initiator protein DnaA (445 aa).

A domain I, interacts with DnaA modulators region spans residues 1-72 (MSGIDTIWEK…QEAFIEEIGE (72 aa)). The interval 72–107 (EKLNIKVISSEDELMNNEKEAPVRKTQQTSQELLPN) is domain II. Positions 108 to 324 (QLNTDNTFDT…GALTRVSAYS (217 aa)) are domain III, AAA+ region. G152, G154, K155, and T156 together coordinate ATP. The tract at residues 325-445 (KLVNRELNSD…LKNIEKDITS (121 aa)) is domain IV, binds dsDNA.

The protein belongs to the DnaA family. In terms of assembly, oligomerizes as a right-handed, spiral filament on DNA at oriC.

It is found in the cytoplasm. Functionally, plays an essential role in the initiation and regulation of chromosomal replication. ATP-DnaA binds to the origin of replication (oriC) to initiate formation of the DNA replication initiation complex once per cell cycle. Binds the DnaA box (a 9 base pair repeat at the origin) and separates the double-stranded (ds)DNA. Forms a right-handed helical filament on oriC DNA; dsDNA binds to the exterior of the filament while single-stranded (ss)DNA is stabiized in the filament's interior. The ATP-DnaA-oriC complex binds and stabilizes one strand of the AT-rich DNA unwinding element (DUE), permitting loading of DNA polymerase. After initiation quickly degrades to an ADP-DnaA complex that is not apt for DNA replication. Binds acidic phospholipids. The chain is Chromosomal replication initiator protein DnaA from Macrococcus caseolyticus (strain JCSC5402) (Macrococcoides caseolyticum).